Reading from the N-terminus, the 308-residue chain is Ornithine carbamoyltransferase (308 aa).

Carbamoyl phosphate is bound by residues Ser-56–Thr-59, Gln-83, Arg-107, and His-134–Gln-137. L-ornithine-binding positions include Asn-165, Asp-225, and Ser-229 to Met-230. Residues Cys-266 to Leu-267 and Arg-294 contribute to the carbamoyl phosphate site.

Belongs to the aspartate/ornithine carbamoyltransferase superfamily. OTCase family.

It is found in the cytoplasm. It carries out the reaction carbamoyl phosphate + L-ornithine = L-citrulline + phosphate + H(+). Its pathway is amino-acid biosynthesis; L-arginine biosynthesis; L-arginine from L-ornithine and carbamoyl phosphate: step 1/3. In terms of biological role, reversibly catalyzes the transfer of the carbamoyl group from carbamoyl phosphate (CP) to the N(epsilon) atom of ornithine (ORN) to produce L-citrulline. The sequence is that of Ornithine carbamoyltransferase from Ruegeria pomeroyi (strain ATCC 700808 / DSM 15171 / DSS-3) (Silicibacter pomeroyi).